We begin with the raw amino-acid sequence, 311 residues long: Cadmium, cobalt and zinc/H(+)-K(+) antiporter (311 aa).

Over 1-12 the chain is Extracellular; that stretch reads MGHNHNEGANKK. A helical transmembrane segment spans residues 13-33; the sequence is VLLISFIMITGYMIIEAIGGF. At 34-43 the chain is on the cytoplasmic side; that stretch reads LTNSLALLSD. Residues 44 to 64 traverse the membrane as a helical segment; sequence AGHMLSDSISLMVALIAFTLA. Over 65 to 78 the chain is Extracellular; sequence EKKANHNKTFGYKR. A helical membrane pass occupies residues 79-99; the sequence is FEILAAVINGAALILISLYII. Residues 100-115 lie on the Cytoplasmic side of the membrane; that stretch reads YEAIERFSNPPKVATT. A helical transmembrane segment spans residues 116–136; the sequence is GMLTISIIGLVVNLLVAWIMM. The Extracellular portion of the chain corresponds to 137-157; the sequence is SGGDTKNNLNIRGAYLHVISD. A helical transmembrane segment spans residues 158 to 178; that stretch reads MLGSVGAILAAILIIFFGWGW. Residues 179 to 311 are Cytoplasmic-facing; it reads ADPLASIIVA…MEKQRDHHHH (133 aa).

The protein belongs to the cation diffusion facilitator (CDF) transporter (TC 2.A.4) family. SLC30A subfamily.

The protein localises to the cell membrane. Its function is as follows. Involved in divalent cation and potassium homeostasis in the cell. Catalyzes the active efflux of zinc, cadmium and cobalt, in exchange for potassium and H(+) ions. This Bacillus subtilis (strain 168) protein is Cadmium, cobalt and zinc/H(+)-K(+) antiporter (czcD).